We begin with the raw amino-acid sequence, 290 residues long: MASSDILSVARTDDGSVCEVSLRGGRKKTTVYLPDTEPWVVETDAIKDAFLSDGIVDMARKLHRGALPSNSHNGLRMVLFCYCYLQNCVYLALFLCPLNPYLVTPSSIEFAEPVVAPEVLFPHPAEMSRGCDDAIFCKLPYTVPIINTTFGRIYPNSTREPDGRPTDYSMALRRAFAVMVNTSCAGVTLCRGETQTASRNHTEWENLLAMFSVIIYALDHNCHPEALSIASGIFDERDYGLFISQPRSVPSPTPCDVSWEDIYNGTYLARPGNCDPWPNLSTPPLILNFK.

The chain is Protein ORF27 (ORF27) from Human herpesvirus 8 type P (isolate GK18) (HHV-8).